Consider the following 514-residue polypeptide: Bifunctional purine biosynthesis protein PurH (514 aa).

Positions 1-142 constitute an MGS-like domain; it reads MLALLSVSDK…KNFRHVSVVV (142 aa).

It belongs to the PurH family.

The catalysed reaction is (6R)-10-formyltetrahydrofolate + 5-amino-1-(5-phospho-beta-D-ribosyl)imidazole-4-carboxamide = 5-formamido-1-(5-phospho-D-ribosyl)imidazole-4-carboxamide + (6S)-5,6,7,8-tetrahydrofolate. The enzyme catalyses IMP + H2O = 5-formamido-1-(5-phospho-D-ribosyl)imidazole-4-carboxamide. The protein operates within purine metabolism; IMP biosynthesis via de novo pathway; 5-formamido-1-(5-phospho-D-ribosyl)imidazole-4-carboxamide from 5-amino-1-(5-phospho-D-ribosyl)imidazole-4-carboxamide (10-formyl THF route): step 1/1. Its pathway is purine metabolism; IMP biosynthesis via de novo pathway; IMP from 5-formamido-1-(5-phospho-D-ribosyl)imidazole-4-carboxamide: step 1/1. The protein is Bifunctional purine biosynthesis protein PurH of Myxococcus xanthus (strain DK1622).